Reading from the N-terminus, the 230-residue chain is Heptaprenylglyceryl phosphate synthase (230 aa).

Lys12 is a sn-glycerol 1-phosphate binding site. 2 residues coordinate Mg(2+): Asp14 and Thr40. Residues 159 to 164, Gly189, and 209 to 210 contribute to the sn-glycerol 1-phosphate site; these read YIEYSG and GD.

This sequence belongs to the GGGP/HepGP synthase family. Group I subfamily. Homodimer. Mg(2+) serves as cofactor.

It carries out the reaction sn-glycerol 1-phosphate + all-trans-heptaprenyl diphosphate = 3-heptaprenyl-sn-glycero-1-phosphate + diphosphate. The protein operates within membrane lipid metabolism; glycerophospholipid metabolism. In terms of biological role, prenyltransferase that catalyzes in vivo the transfer of the heptaprenyl moiety of heptaprenyl pyrophosphate (HepPP; 35 carbon atoms) to the C3 hydroxyl of sn-glycerol-1-phosphate (G1P), producing heptaprenylglyceryl phosphate (HepGP). This reaction is an ether-bond-formation step in the biosynthesis of archaea-type G1P-based membrane lipids found in Bacillales. To a much lesser extent, is also able to use geranylgeranyl diphosphate (GGPP; C20) as the prenyl donor. This is Heptaprenylglyceryl phosphate synthase from Staphylococcus aureus (strain NCTC 8325 / PS 47).